We begin with the raw amino-acid sequence, 360 residues long: DNA replication and repair protein RecF (360 aa).

Position 30–37 (30–37 (GHNGSGKT)) interacts with ATP.

Belongs to the RecF family.

It is found in the cytoplasm. The RecF protein is involved in DNA metabolism; it is required for DNA replication and normal SOS inducibility. RecF binds preferentially to single-stranded, linear DNA. It also seems to bind ATP. The chain is DNA replication and repair protein RecF from Shewanella amazonensis (strain ATCC BAA-1098 / SB2B).